The sequence spans 396 residues: Tyrosine--tRNA ligase (396 aa).

The short motif at 43 to 52 is the 'HIGH' region element; that stretch reads PSSPDIHLGH. The short motif at 227–231 is the 'KMSKS' region element; sequence KMSKS. Lys230 is a binding site for ATP. Residues 338–396 enclose the S4 RNA-binding domain; the sequence is ICVIDFIIKADLAKSKSEARRLLEQGGVEINSAKISDPGTTVKCGDIIKAGKRRYSKAV.

This sequence belongs to the class-I aminoacyl-tRNA synthetase family. TyrS type 2 subfamily. Homodimer.

Its subcellular location is the cytoplasm. The enzyme catalyses tRNA(Tyr) + L-tyrosine + ATP = L-tyrosyl-tRNA(Tyr) + AMP + diphosphate + H(+). Its function is as follows. Catalyzes the attachment of tyrosine to tRNA(Tyr) in a two-step reaction: tyrosine is first activated by ATP to form Tyr-AMP and then transferred to the acceptor end of tRNA(Tyr). This is Tyrosine--tRNA ligase from Dehalococcoides mccartyi (strain ATCC BAA-2266 / KCTC 15142 / 195) (Dehalococcoides ethenogenes (strain 195)).